The primary structure comprises 165 residues: MSLPEKAFPVSWDQFHRDARALAWRLADNGQEWRAMVCITRGGLVPAAIVSRELNIRMIETVCIASYHDYDTQGQMKVLKSISPEIAKSGGEGVLIVDDLTDTGKTAAEVRAMLPKAHFAAVYAKPKGRPLVDTFVTEVSQDTWIYFPWDLGFTYQEPIAKGTRG.

5-phospho-alpha-D-ribose 1-diphosphate contacts are provided by residues 41–42 (RG) and 98–106 (DDLTDTGKT). Aspartate 99 lines the Mg(2+) pocket. Positions 102 and 145 each coordinate guanine. Xanthine-binding residues include aspartate 102 and isoleucine 145. Residues 102-106 (DTGKT) and 144-145 (WI) each bind GMP.

This sequence belongs to the purine/pyrimidine phosphoribosyltransferase family. XGPT subfamily. In terms of assembly, homotetramer. Mg(2+) serves as cofactor.

Its subcellular location is the cell inner membrane. It carries out the reaction GMP + diphosphate = guanine + 5-phospho-alpha-D-ribose 1-diphosphate. The enzyme catalyses XMP + diphosphate = xanthine + 5-phospho-alpha-D-ribose 1-diphosphate. It catalyses the reaction IMP + diphosphate = hypoxanthine + 5-phospho-alpha-D-ribose 1-diphosphate. Its pathway is purine metabolism; GMP biosynthesis via salvage pathway; GMP from guanine: step 1/1. It participates in purine metabolism; XMP biosynthesis via salvage pathway; XMP from xanthine: step 1/1. In terms of biological role, purine salvage pathway enzyme that catalyzes the transfer of the ribosyl-5-phosphate group from 5-phospho-alpha-D-ribose 1-diphosphate (PRPP) to the N9 position of the 6-oxopurines guanine and xanthine to form the corresponding ribonucleotides GMP (guanosine 5'-monophosphate) and XMP (xanthosine 5'-monophosphate), with the release of PPi. To a lesser extent, also acts on hypoxanthine. The protein is Xanthine-guanine phosphoribosyltransferase of Sinorhizobium medicae (strain WSM419) (Ensifer medicae).